The chain runs to 152 residues: Deoxyuridine 5'-triphosphate nucleotidohydrolase (152 aa).

Residues 71-73 (RSG), Asn84, 88-90 (LID), and Met98 contribute to the substrate site.

The protein belongs to the dUTPase family. Requires Mg(2+) as cofactor.

It catalyses the reaction dUTP + H2O = dUMP + diphosphate + H(+). It participates in pyrimidine metabolism; dUMP biosynthesis; dUMP from dCTP (dUTP route): step 2/2. This enzyme is involved in nucleotide metabolism: it produces dUMP, the immediate precursor of thymidine nucleotides and it decreases the intracellular concentration of dUTP so that uracil cannot be incorporated into DNA. The protein is Deoxyuridine 5'-triphosphate nucleotidohydrolase of Haemophilus ducreyi (strain 35000HP / ATCC 700724).